The primary structure comprises 342 residues: Uroporphyrinogen decarboxylase (342 aa).

Residues 22–26 (RQAGR), Phe-41, Asp-72, Tyr-146, Ser-201, and His-317 each bind substrate.

This sequence belongs to the uroporphyrinogen decarboxylase family. In terms of assembly, homodimer.

The protein localises to the cytoplasm. It carries out the reaction uroporphyrinogen III + 4 H(+) = coproporphyrinogen III + 4 CO2. Its pathway is porphyrin-containing compound metabolism; protoporphyrin-IX biosynthesis; coproporphyrinogen-III from 5-aminolevulinate: step 4/4. In terms of biological role, catalyzes the decarboxylation of four acetate groups of uroporphyrinogen-III to yield coproporphyrinogen-III. This is Uroporphyrinogen decarboxylase from Orientia tsutsugamushi (strain Boryong) (Rickettsia tsutsugamushi).